We begin with the raw amino-acid sequence, 201 residues long: uncharacterized protein (201 aa).

2 coiled-coil regions span residues 3–43 (YMDD…EVYK) and 76–120 (TGQV…AKTK).

This is an uncharacterized protein from Archaeoglobus fulgidus (strain ATCC 49558 / DSM 4304 / JCM 9628 / NBRC 100126 / VC-16).